The chain runs to 56 residues: Photosystem II reaction center X protein (56 aa).

The chain crosses the membrane as a helical span at residues 27-47 (IGSFLAAGALIVAPAAAALIW).

Belongs to the PsbX family. Type 2 subfamily. As to quaternary structure, PSII consists of a core antenna complex that captures photons, and an electron transfer chain that converts photonic excitation into a charge separation. PSII forms dimeric complexes.

Its subcellular location is the cellular thylakoid membrane. Involved in the binding and/or turnover of quinones at the Q(B) site of Photosystem II. The chain is Photosystem II reaction center X protein from Prochlorococcus marinus (strain NATL2A).